A 104-amino-acid polypeptide reads, in one-letter code: DNA-directed RNA polymerase subunit omega (104 aa).

The tract at residues 76–104 (IEEEKRRKEEEEKKIKEQIAKEKEDGEKI) is disordered.

It belongs to the RNA polymerase subunit omega family. As to quaternary structure, the RNAP catalytic core consists of 2 alpha, 1 beta, 1 beta' and 1 omega subunit. When a sigma factor is associated with the core the holoenzyme is formed, which can initiate transcription.

The catalysed reaction is RNA(n) + a ribonucleoside 5'-triphosphate = RNA(n+1) + diphosphate. Its function is as follows. Promotes RNA polymerase assembly. Latches the N- and C-terminal regions of the beta' subunit thereby facilitating its interaction with the beta and alpha subunits. The chain is DNA-directed RNA polymerase subunit omega from Streptococcus pneumoniae (strain CGSP14).